The primary structure comprises 94 residues: Integration host factor subunit beta (94 aa).

The protein belongs to the bacterial histone-like protein family. As to quaternary structure, heterodimer of an alpha and a beta chain.

In terms of biological role, this protein is one of the two subunits of integration host factor, a specific DNA-binding protein that functions in genetic recombination as well as in transcriptional and translational control. In Photorhabdus laumondii subsp. laumondii (strain DSM 15139 / CIP 105565 / TT01) (Photorhabdus luminescens subsp. laumondii), this protein is Integration host factor subunit beta.